Here is a 260-residue protein sequence, read N- to C-terminus: Uridylate kinase (260 aa).

Residue 29–32 (KLSG) participates in ATP binding. Residues 37–42 (GDLGYG) are involved in allosteric activation by GTP. Gly-71 provides a ligand contact to UMP. The ATP site is built by Gly-72 and Arg-76. UMP is bound by residues Asp-91 and 152–159 (SGNPFFTT). ATP contacts are provided by Thr-179, Tyr-185, and Asp-188.

The protein belongs to the UMP kinase family. In terms of assembly, homohexamer.

The protein localises to the cytoplasm. The catalysed reaction is UMP + ATP = UDP + ADP. It participates in pyrimidine metabolism; CTP biosynthesis via de novo pathway; UDP from UMP (UMPK route): step 1/1. With respect to regulation, allosterically activated by GTP. Inhibited by UTP. In terms of biological role, catalyzes the reversible phosphorylation of UMP to UDP. In Synechocystis sp. (strain ATCC 27184 / PCC 6803 / Kazusa), this protein is Uridylate kinase.